A 359-amino-acid chain; its full sequence is Chaperone protein DnaJ (359 aa).

Residues 3 to 68 (DYYEILGVPK…ERRQTYDRYG (66 aa)) form the J domain. The segment at 128-205 (GVSKDIKYKI…CAGKGFIEEQ (78 aa)) adopts a CR-type zinc-finger fold. Zn(2+)-binding residues include cysteine 141, cysteine 144, cysteine 157, cysteine 160, cysteine 179, cysteine 182, cysteine 193, and cysteine 196. CXXCXGXG motif repeat units follow at residues 141–148 (CKTCDGTG), 157–164 (CPYCGGSG), 179–186 (CPFCKGSG), and 193–200 (CHDCAGKG).

This sequence belongs to the DnaJ family. Homodimer. Requires Zn(2+) as cofactor.

The protein localises to the cytoplasm. Its function is as follows. Participates actively in the response to hyperosmotic and heat shock by preventing the aggregation of stress-denatured proteins and by disaggregating proteins, also in an autonomous, DnaK-independent fashion. Unfolded proteins bind initially to DnaJ; upon interaction with the DnaJ-bound protein, DnaK hydrolyzes its bound ATP, resulting in the formation of a stable complex. GrpE releases ADP from DnaK; ATP binding to DnaK triggers the release of the substrate protein, thus completing the reaction cycle. Several rounds of ATP-dependent interactions between DnaJ, DnaK and GrpE are required for fully efficient folding. Also involved, together with DnaK and GrpE, in the DNA replication of plasmids through activation of initiation proteins. The chain is Chaperone protein DnaJ from Campylobacter hominis (strain ATCC BAA-381 / DSM 21671 / CCUG 45161 / LMG 19568 / NCTC 13146 / CH001A).